The sequence spans 296 residues: Probable lipid kinase YegS-like (296 aa).

In terms of domain architecture, DAGKc spans 1-130 (MPHTLLILNG…IDLAQVNGEH (130 aa)). Residues Thr37, 63–69 (GDGTINE), and Thr92 each bind ATP. Residues Leu212, Asp215, and Leu217 each contribute to the Mg(2+) site. Catalysis depends on Glu268, which acts as the Proton acceptor.

It belongs to the diacylglycerol/lipid kinase family. YegS lipid kinase subfamily. It depends on Mg(2+) as a cofactor. Ca(2+) is required as a cofactor.

Its subcellular location is the cytoplasm. In terms of biological role, probably phosphorylates lipids; the in vivo substrate is unknown. The chain is Probable lipid kinase YegS-like from Yersinia pseudotuberculosis serotype I (strain IP32953).